We begin with the raw amino-acid sequence, 280 residues long: MKPFLRTRVYDGPVRAVVLDWAGTAVDHGCLGPAAVFVQAFALHGVEVAVSEAREPMGSEKREHVRRMLAMDSVAARWRAVHGHVPHEADVDAVYRDVEPLMLQTIAAHAVPVPGLAEFVDRVRGRGMGLGSCTGYTGPMMEVLVPEAARRGYSPDVVVHASEVPAGRPYPWMCYLNAMRLGVHPMESMVKIGDTVADMHEARNAGMWTVGVVRTGNDVGLSEVDAARMPPDQLAARMTVAAARLREAGAHYVVDSIADCFSVIKAIEARLARGDTPYPA.

Aspartate 20 functions as the Nucleophile in the catalytic mechanism. Mg(2+)-binding residues include aspartate 20 and alanine 22. The active-site Schiff-base intermediate with substrate is the lysine 61. A Mg(2+)-binding site is contributed by aspartate 194.

Belongs to the HAD-like hydrolase superfamily. PhnX family. As to quaternary structure, homodimer. Requires Mg(2+) as cofactor.

It catalyses the reaction phosphonoacetaldehyde + H2O = acetaldehyde + phosphate + H(+). In terms of biological role, involved in phosphonate degradation. The polypeptide is Phosphonoacetaldehyde hydrolase (Nitratidesulfovibrio vulgaris (strain DSM 19637 / Miyazaki F) (Desulfovibrio vulgaris)).